Here is an 81-residue protein sequence, read N- to C-terminus: MNVQHEVSLLVGEIQRLGSKNADGQTCVKFGVLFNDDRCANIFEALVGTLRAAKRKKIIAFEGELLLQGVHDNVDITLLQE.

This sequence belongs to the costars family.

The sequence is that of Costars family protein ABRACL from Salmo salar (Atlantic salmon).